The following is a 101-amino-acid chain: NADH-quinone oxidoreductase subunit K (101 aa).

The next 3 membrane-spanning stretches (helical) occupy residues 4–24 (LTHY…GIFM), 30–50 (LVLL…FIAF), and 61–81 (IFVF…LAIM).

It belongs to the complex I subunit 4L family. NDH-1 is composed of 14 different subunits. Subunits NuoA, H, J, K, L, M, N constitute the membrane sector of the complex.

The protein resides in the cell inner membrane. The enzyme catalyses a quinone + NADH + 5 H(+)(in) = a quinol + NAD(+) + 4 H(+)(out). Functionally, NDH-1 shuttles electrons from NADH, via FMN and iron-sulfur (Fe-S) centers, to quinones in the respiratory chain. The immediate electron acceptor for the enzyme in this species is believed to be ubiquinone. Couples the redox reaction to proton translocation (for every two electrons transferred, four hydrogen ions are translocated across the cytoplasmic membrane), and thus conserves the redox energy in a proton gradient. This Neisseria meningitidis serogroup B (strain ATCC BAA-335 / MC58) protein is NADH-quinone oxidoreductase subunit K.